The sequence spans 341 residues: Methionine import ATP-binding protein MetN (341 aa).

An ABC transporter domain is found at 9-247; that stretch reads ISVQKVNKEI…PRSSITEELF (239 aa). Residue 41 to 48 coordinates ATP; that stretch reads GHSGSGKS.

It belongs to the ABC transporter superfamily. Methionine importer (TC 3.A.1.24) family. In terms of assembly, the complex is composed of two ATP-binding proteins (MetN), two transmembrane proteins (MetI) and a solute-binding protein (MetQ).

Its subcellular location is the cell inner membrane. It catalyses the reaction L-methionine(out) + ATP + H2O = L-methionine(in) + ADP + phosphate + H(+). It carries out the reaction D-methionine(out) + ATP + H2O = D-methionine(in) + ADP + phosphate + H(+). Functionally, part of the ABC transporter complex MetNIQ involved in methionine import. Responsible for energy coupling to the transport system. The chain is Methionine import ATP-binding protein MetN from Chlamydia caviae (strain ATCC VR-813 / DSM 19441 / 03DC25 / GPIC) (Chlamydophila caviae).